The chain runs to 234 residues: Phosphoribosylformylglycinamidine synthase subunit PurQ (234 aa).

The Glutamine amidotransferase type-1 domain maps to 4–234; sequence RIGVVTFPGS…TSILKKLVNA (231 aa). The active-site Nucleophile is cysteine 87. Residues histidine 204 and glutamate 206 contribute to the active site.

As to quaternary structure, part of the FGAM synthase complex composed of 1 PurL, 1 PurQ and 2 PurS subunits.

It localises to the cytoplasm. It catalyses the reaction N(2)-formyl-N(1)-(5-phospho-beta-D-ribosyl)glycinamide + L-glutamine + ATP + H2O = 2-formamido-N(1)-(5-O-phospho-beta-D-ribosyl)acetamidine + L-glutamate + ADP + phosphate + H(+). The enzyme catalyses L-glutamine + H2O = L-glutamate + NH4(+). It functions in the pathway purine metabolism; IMP biosynthesis via de novo pathway; 5-amino-1-(5-phospho-D-ribosyl)imidazole from N(2)-formyl-N(1)-(5-phospho-D-ribosyl)glycinamide: step 1/2. In terms of biological role, part of the phosphoribosylformylglycinamidine synthase complex involved in the purines biosynthetic pathway. Catalyzes the ATP-dependent conversion of formylglycinamide ribonucleotide (FGAR) and glutamine to yield formylglycinamidine ribonucleotide (FGAM) and glutamate. The FGAM synthase complex is composed of three subunits. PurQ produces an ammonia molecule by converting glutamine to glutamate. PurL transfers the ammonia molecule to FGAR to form FGAM in an ATP-dependent manner. PurS interacts with PurQ and PurL and is thought to assist in the transfer of the ammonia molecule from PurQ to PurL. In Streptomyces avermitilis (strain ATCC 31267 / DSM 46492 / JCM 5070 / NBRC 14893 / NCIMB 12804 / NRRL 8165 / MA-4680), this protein is Phosphoribosylformylglycinamidine synthase subunit PurQ.